Here is a 199-residue protein sequence, read N- to C-terminus: V-type ATP synthase subunit E (199 aa).

This sequence belongs to the V-ATPase E subunit family.

Functionally, produces ATP from ADP in the presence of a proton gradient across the membrane. The protein is V-type ATP synthase subunit E of Borrelia garinii subsp. bavariensis (strain ATCC BAA-2496 / DSM 23469 / PBi) (Borreliella bavariensis).